Reading from the N-terminus, the 320-residue chain is MERTNDSTSTEFFLVGLSAHPKLQTVFFVLILWMYLMILLGNGVLISVIIFDSHLHTPMYFFLCNLSFLDVCYTSSSVPLILASFLAVKKKVSFSGCMVQMFISFAMGATECMILGTMALDRYVAICYPLRYPVIMSKGAYVAMAAGSWVTGLVDSVVQTAFAMQLPFCANNVIKHFVCEILAILKLACADISINVISMTGSNLIVLVIPLLVISISYIFIVATILRIPSTEGKHKAFSTCSAHLTVVIIFYGTIFFMYAKPESKASVDSGNEDIIEALISLFYGVMTPMLNPLIYSLRNKDVKAAVKNILCRKNFSDGK.

The Extracellular segment spans residues 1-25 (MERTNDSTSTEFFLVGLSAHPKLQT). A glycan (N-linked (GlcNAc...) asparagine) is linked at Asn5. Residues 26–46 (VFFVLILWMYLMILLGNGVLI) form a helical membrane-spanning segment. At 47–54 (SVIIFDSH) the chain is on the cytoplasmic side. Residues 55 to 75 (LHTPMYFFLCNLSFLDVCYTS) form a helical membrane-spanning segment. Residues 76 to 99 (SSVPLILASFLAVKKKVSFSGCMV) lie on the Extracellular side of the membrane. Cys97 and Cys189 are disulfide-bonded. The helical transmembrane segment at 100 to 120 (QMFISFAMGATECMILGTMAL) threads the bilayer. Topologically, residues 121–139 (DRYVAICYPLRYPVIMSKG) are cytoplasmic. The chain crosses the membrane as a helical span at residues 140–160 (AYVAMAAGSWVTGLVDSVVQT). Residues 161-197 (AFAMQLPFCANNVIKHFVCEILAILKLACADISINVI) lie on the Extracellular side of the membrane. The helical transmembrane segment at 198–217 (SMTGSNLIVLVIPLLVISIS) threads the bilayer. Residues 218–237 (YIFIVATILRIPSTEGKHKA) are Cytoplasmic-facing. A helical membrane pass occupies residues 238 to 258 (FSTCSAHLTVVIIFYGTIFFM). Residues 259-277 (YAKPESKASVDSGNEDIIE) are Extracellular-facing. Residues 278-298 (ALISLFYGVMTPMLNPLIYSL) form a helical membrane-spanning segment. Residues 299 to 320 (RNKDVKAAVKNILCRKNFSDGK) lie on the Cytoplasmic side of the membrane.

The protein belongs to the G-protein coupled receptor 1 family.

It localises to the cell membrane. Odorant receptor. The polypeptide is Olfactory receptor 13C8 (OR13C8) (Homo sapiens (Human)).